The chain runs to 70 residues: ATP synthase subunit c (70 aa).

2 consecutive transmembrane segments (helical) span residues Ile-4–Ile-24 and Phe-47–Leu-67.

Belongs to the ATPase C chain family. As to quaternary structure, F-type ATPases have 2 components, F(1) - the catalytic core - and F(0) - the membrane proton channel. F(1) has five subunits: alpha(3), beta(3), gamma(1), delta(1), epsilon(1). F(0) has three main subunits: a(1), b(2) and c(10-14). The alpha and beta chains form an alternating ring which encloses part of the gamma chain. F(1) is attached to F(0) by a central stalk formed by the gamma and epsilon chains, while a peripheral stalk is formed by the delta and b chains.

The protein resides in the cell membrane. Its function is as follows. F(1)F(0) ATP synthase produces ATP from ADP in the presence of a proton or sodium gradient. F-type ATPases consist of two structural domains, F(1) containing the extramembraneous catalytic core and F(0) containing the membrane proton channel, linked together by a central stalk and a peripheral stalk. During catalysis, ATP synthesis in the catalytic domain of F(1) is coupled via a rotary mechanism of the central stalk subunits to proton translocation. Key component of the F(0) channel; it plays a direct role in translocation across the membrane. A homomeric c-ring of between 10-14 subunits forms the central stalk rotor element with the F(1) delta and epsilon subunits. This is ATP synthase subunit c from Exiguobacterium sibiricum (strain DSM 17290 / CCUG 55495 / CIP 109462 / JCM 13490 / 255-15).